The primary structure comprises 148 residues: 3-dehydroquinate dehydratase (148 aa).

The active-site Proton acceptor is the Tyr23. The substrate site is built by Asn74, His80, and Asp87. His100 serves as the catalytic Proton donor. Substrate contacts are provided by residues 101-102 (IS) and Arg111.

Belongs to the type-II 3-dehydroquinase family. As to quaternary structure, homododecamer.

It catalyses the reaction 3-dehydroquinate = 3-dehydroshikimate + H2O. The protein operates within metabolic intermediate biosynthesis; chorismate biosynthesis; chorismate from D-erythrose 4-phosphate and phosphoenolpyruvate: step 3/7. In terms of biological role, catalyzes a trans-dehydration via an enolate intermediate. This is 3-dehydroquinate dehydratase from Thermoanaerobacter pseudethanolicus (strain ATCC 33223 / 39E) (Clostridium thermohydrosulfuricum).